Reading from the N-terminus, the 358-residue chain is Peptide chain release factor 1 (358 aa).

Position 234 is an N5-methylglutamine (Q234). Positions 283 to 306 (ERLHSERAGQRKSMVGSGDRSERI) are disordered.

It belongs to the prokaryotic/mitochondrial release factor family. Post-translationally, methylated by PrmC. Methylation increases the termination efficiency of RF1.

It is found in the cytoplasm. Its function is as follows. Peptide chain release factor 1 directs the termination of translation in response to the peptide chain termination codons UAG and UAA. This is Peptide chain release factor 1 from Zymomonas mobilis subsp. mobilis (strain ATCC 31821 / ZM4 / CP4).